A 287-amino-acid polypeptide reads, in one-letter code: Ribosomal RNA small subunit methyltransferase A (287 aa).

S-adenosyl-L-methionine is bound by residues Asn28, Leu30, Gly55, Glu77, Asp103, and Asn123.

Belongs to the class I-like SAM-binding methyltransferase superfamily. rRNA adenine N(6)-methyltransferase family. RsmA subfamily.

The protein localises to the cytoplasm. It carries out the reaction adenosine(1518)/adenosine(1519) in 16S rRNA + 4 S-adenosyl-L-methionine = N(6)-dimethyladenosine(1518)/N(6)-dimethyladenosine(1519) in 16S rRNA + 4 S-adenosyl-L-homocysteine + 4 H(+). Functionally, specifically dimethylates two adjacent adenosines (A1518 and A1519) in the loop of a conserved hairpin near the 3'-end of 16S rRNA in the 30S particle. May play a critical role in biogenesis of 30S subunits. This chain is Ribosomal RNA small subunit methyltransferase A, found in Rhodopseudomonas palustris (strain BisB5).